The chain runs to 507 residues: Carnosic acid synthase (507 aa).

Residues 6–23 (VFSLAFLAAWFIVVFPRW) traverse the membrane as a helical segment. Residue C450 participates in heme binding.

Belongs to the cytochrome P450 family. Heme serves as cofactor. In terms of tissue distribution, expressed in glandular trichomes of young leaves.

It is found in the membrane. It carries out the reaction 11-hydroxyferruginol + 3 reduced [NADPH--hemoprotein reductase] + 3 O2 = carnosate + 3 oxidized [NADPH--hemoprotein reductase] + 4 H2O + 4 H(+). It catalyses the reaction miltiradiene + 2 reduced [NADPH--hemoprotein reductase] + 2 O2 = miltiradien-20-al + 2 oxidized [NADPH--hemoprotein reductase] + 3 H2O + 2 H(+). The catalysed reaction is ferruginol + 3 reduced [NADPH--hemoprotein reductase] + 3 O2 = pisiferate + 3 oxidized [NADPH--hemoprotein reductase] + 4 H2O + 4 H(+). Its pathway is secondary metabolite biosynthesis; terpenoid biosynthesis. Functionally, monooxygenase involved in the biosynthesis of carnosate, a potent antioxidant labdane-related diterpene natural product. Catalyzes the oxidation of 11-hydroxyferruginol to produce carnosate. Mediates the conversion of miltiradien into miltiradien-20-al. Also involved in the production of pisiferic acid and derivative products from ferruginol. The sequence is that of Carnosic acid synthase from Rosmarinus officinalis (Rosemary).